The sequence spans 264 residues: Occludin/ELL domain-containing protein 1 (264 aa).

A compositionally biased stretch (polar residues) spans 1 to 10 (MHNPDGSASP). The tract at residues 1-112 (MHNPDGSASP…QPGPHKAKTK (112 aa)) is disordered. Pro residues predominate over residues 96-105 (PRPPCQPQPG). In terms of domain architecture, OCEL spans 147 to 257 (PDYELKYPPV…QIQKFDDQGD (111 aa)).

It belongs to the ELL/occludin family.

The protein is Occludin/ELL domain-containing protein 1 (OCEL1) of Homo sapiens (Human).